The primary structure comprises 397 residues: L-rhamnonate dehydratase (397 aa).

His25 and Arg51 together coordinate substrate. Mg(2+) contacts are provided by Asp217, Glu243, and Glu271. His321 (proton acceptor) is an active-site residue. Glu341 is a binding site for substrate.

The protein belongs to the mandelate racemase/muconate lactonizing enzyme family. RhamD subfamily. As to quaternary structure, homooctamer; tetramer of dimers. Mg(2+) is required as a cofactor.

It catalyses the reaction L-rhamnonate = 2-dehydro-3-deoxy-L-rhamnonate + H2O. Its pathway is carbohydrate degradation; L-rhamnose degradation. In terms of biological role, catalyzes the dehydration of L-rhamnonate to 2-keto-3-deoxy-L-rhamnonate (KDR). Also shows activity with L-lyxonate and L-mannonate, with much lower catalytic efficiency. Catalyzes the third step in an alternative pathway for rhamnose utilization that does not involve phosphorylated intermediates. The polypeptide is L-rhamnonate dehydratase (Sphingomonas sp. (strain SKA58)).